Consider the following 167-residue polypeptide: Leptin (167 aa).

The N-terminal stretch at 1 to 21 (MCWRPLCRFLWLWSYLSYVQA) is a signal peptide. The cysteines at positions 117 and 167 are disulfide-linked.

It belongs to the leptin family.

The protein resides in the secreted. In terms of biological role, key player in the regulation of energy balance and body weight control. Once released into the circulation, has central and peripheral effects by binding LEPR, found in many tissues, which results in the activation of several major signaling pathways. In the hypothalamus, acts as an appetite-regulating factor that induces a decrease in food intake and an increase in energy consumption by inducing anorexinogenic factors and suppressing orexigenic neuropeptides, also regulates bone mass and secretion of hypothalamo-pituitary-adrenal hormones. In the periphery, increases basal metabolism, influences reproductive function, regulates pancreatic beta-cell function and insulin secretion, is pro-angiogenic for endothelial cell and affects innate and adaptive immunity. In the arcuate nucleus of the hypothalamus, activates by depolarization POMC neurons inducing FOS and SOCS3 expression to release anorexigenic peptides and inhibits by hyperpolarization NPY neurons inducing SOCS3 with a consequent reduction on release of orexigenic peptides. In addition to its known satiety inducing effect, has a modulatory role in nutrient absorption. In the intestine, reduces glucose absorption by enterocytes by activating PKC and leading to a sequential activation of p38, PI3K and ERK signaling pathways which exerts an inhibitory effect on glucose absorption. Acts as a growth factor on certain tissues, through the activation of different signaling pathways increases expression of genes involved in cell cycle regulation such as CCND1, via JAK2-STAT3 pathway, or VEGFA, via MAPK1/3 and PI3K-AKT1 pathways. May also play an apoptotic role via JAK2-STAT3 pathway and up-regulation of BIRC5 expression. Pro-angiogenic, has mitogenic activity on vascular endothelial cells and plays a role in matrix remodeling by regulating the expression of matrix metalloproteinases (MMPs) and tissue inhibitors of metalloproteinases (TIMPs). In innate immunity, modulates the activity and function of neutrophils by increasing chemotaxis and the secretion of oxygen radicals. Increases phagocytosis by macrophages and enhances secretion of pro-inflammatory mediators. Increases cytotoxic ability of NK cells. Plays a pro-inflammatory role, in synergy with IL1B, by inducing NOS2 which promotes the production of IL6, IL8 and Prostaglandin E2, through a signaling pathway that involves JAK2, PI3K, MAP2K1/MEK1 and MAPK14/p38. In adaptive immunity, promotes the switch of memory T-cells towards T helper-1 cell immune responses. Increases CD4(+)CD25(-) T cells proliferation and reduces autophagy during TCR (T cell receptor) stimulation, through MTOR signaling pathway activation and BCL2 up-regulation. The protein is Leptin (Lep) of Mus musculus (Mouse).